A 171-amino-acid polypeptide reads, in one-letter code: Protein X (171 aa).

Helical transmembrane passes span Ser11–Leu31, Leu38–Met58, and Ala73–Ile93.

Its subcellular location is the virion membrane. This Mus musculus domesticus (western European house mouse) protein is Protein X (VPX).